The following is a 352-amino-acid chain: 4-hydroxy-3-methylbut-2-en-1-yl diphosphate synthase (flavodoxin) (352 aa).

Positions 265, 268, 300, and 307 each coordinate [4Fe-4S] cluster.

The protein belongs to the IspG family. Requires [4Fe-4S] cluster as cofactor.

The catalysed reaction is (2E)-4-hydroxy-3-methylbut-2-enyl diphosphate + oxidized [flavodoxin] + H2O + 2 H(+) = 2-C-methyl-D-erythritol 2,4-cyclic diphosphate + reduced [flavodoxin]. It participates in isoprenoid biosynthesis; isopentenyl diphosphate biosynthesis via DXP pathway; isopentenyl diphosphate from 1-deoxy-D-xylulose 5-phosphate: step 5/6. Functionally, converts 2C-methyl-D-erythritol 2,4-cyclodiphosphate (ME-2,4cPP) into 1-hydroxy-2-methyl-2-(E)-butenyl 4-diphosphate. The sequence is that of 4-hydroxy-3-methylbut-2-en-1-yl diphosphate synthase (flavodoxin) from Persephonella marina (strain DSM 14350 / EX-H1).